The sequence spans 505 residues: Lysine--tRNA ligase (505 aa).

Residues E403 and E410 each contribute to the Mg(2+) site.

Belongs to the class-II aminoacyl-tRNA synthetase family. In terms of assembly, homodimer. Mg(2+) serves as cofactor.

The protein localises to the cytoplasm. It carries out the reaction tRNA(Lys) + L-lysine + ATP = L-lysyl-tRNA(Lys) + AMP + diphosphate. This is Lysine--tRNA ligase from Methanospirillum hungatei JF-1 (strain ATCC 27890 / DSM 864 / NBRC 100397 / JF-1).